Here is a 1151-residue protein sequence, read N- to C-terminus: uncharacterized protein (1151 aa).

Disordered regions lie at residues 611–633 (FVKG…DEEE), 709–740 (NLVP…IMEV), 753–778 (PPIL…KSIL), 795–880 (PPVI…PPKL), and 1060–1151 (LKEP…TQQE). Composition is skewed to pro residues over residues 754 to 773 (PILP…PQEP) and 811 to 842 (IVPP…PSQP). Residues 867-878 (PITPDTPAITPP) are compositionally biased toward low complexity. Residues 1082–1091 (ESDNEDDELD) are compositionally biased toward acidic residues. The span at 1131–1142 (PVDTSDATKIST) shows a compositional bias: polar residues.

This is an uncharacterized protein from Ostreid herpesvirus 1 (isolate France) (OsHV-1).